A 474-amino-acid polypeptide reads, in one-letter code: Glycogen synthase (474 aa).

Residue lysine 15 participates in ADP-alpha-D-glucose binding.

This sequence belongs to the glycosyltransferase 1 family. Bacterial/plant glycogen synthase subfamily.

It carries out the reaction [(1-&gt;4)-alpha-D-glucosyl](n) + ADP-alpha-D-glucose = [(1-&gt;4)-alpha-D-glucosyl](n+1) + ADP + H(+). It participates in glycan biosynthesis; glycogen biosynthesis. Its function is as follows. Synthesizes alpha-1,4-glucan chains using ADP-glucose. The polypeptide is Glycogen synthase (Chlamydia trachomatis serovar A (strain ATCC VR-571B / DSM 19440 / HAR-13)).